The primary structure comprises 359 residues: MSFEDSLEGLCEKFRILKQQLSDPESLGVQAFVVASREYSDLLPIMSLIEEYQTAQKEIEELEGLINSTDTDAELVHLAREELYTKQKLIPKLKHQLQLSLLPKDKDDSRSAILEIRAGTGGEEAALFVCDLYRMYIKYAERKSWKVEPIGISTTGIGGYKEASLCIGGKDVFARLKFESGVHRVQRVPETESSGRLHTSAATVAVLPEVEEVDLKIDEKDLRIDVYRSSGPGGQSVNTTDSAVRITHIPTGIVVIQQDEKSQHKNKSKALKVLRARLYNLEKQKIEDEISKMRKSQIGSGDRSERIRTYNFLQSRITDHRINMTLYRLEHIMKEGDLDEFVDALIADDQANKLQQISS.

Glutamine 235 is modified (N5-methylglutamine).

It belongs to the prokaryotic/mitochondrial release factor family. Post-translationally, methylated by PrmC. Methylation increases the termination efficiency of RF1.

It is found in the cytoplasm. Functionally, peptide chain release factor 1 directs the termination of translation in response to the peptide chain termination codons UAG and UAA. The sequence is that of Peptide chain release factor 1 from Anaplasma marginale (strain Florida).